We begin with the raw amino-acid sequence, 286 residues long: Small ribosomal subunit protein uS3 (286 aa).

A KH type-2 domain is found at 39–107; sequence VREYLKKKLA…PVHVNIEEIR (69 aa). The segment at 213 to 286 is disordered; sequence QAGAGTAAPQ…KPGVNDAAAS (74 aa). Over residues 241-262 the composition is skewed to basic and acidic residues; that stretch reads GRADARSDGKAGEKKGPRKSDN.

The protein belongs to the universal ribosomal protein uS3 family. In terms of assembly, part of the 30S ribosomal subunit. Forms a tight complex with proteins S10 and S14.

Binds the lower part of the 30S subunit head. Binds mRNA in the 70S ribosome, positioning it for translation. The protein is Small ribosomal subunit protein uS3 of Nitrosospira multiformis (strain ATCC 25196 / NCIMB 11849 / C 71).